The sequence spans 157 residues: Prefoldin subunit alpha (157 aa).

It belongs to the prefoldin subunit alpha family. In terms of assembly, heterohexamer of two alpha and four beta subunits.

The protein localises to the cytoplasm. Its function is as follows. Molecular chaperone capable of stabilizing a range of proteins. Seems to fulfill an ATP-independent, HSP70-like function in archaeal de novo protein folding. This chain is Prefoldin subunit alpha, found in Methanopyrus kandleri (strain AV19 / DSM 6324 / JCM 9639 / NBRC 100938).